The chain runs to 421 residues: Elsinochrome C biosynthesis regulatory protein elcR (421 aa).

Residues 1 to 16 (MATQLPSPTATTSHSG) show a composition bias toward polar residues. The interval 1–20 (MATQLPSPTATTSHSGNEPR) is disordered. Residues 27–54 (CNNCSAQKIRCGKQRPACARCVNKKLQC) constitute a DNA-binding region (zn(2)-C6 fungal-type).

The protein resides in the nucleus. In terms of biological role, transcription regulator of the gene cluster that mediates the biosynthesis of elsinochrome C, a perelyenequinone phytotoxin structurally similar to cercosporin. This chain is Elsinochrome C biosynthesis regulatory protein elcR, found in Phaeosphaeria nodorum (strain SN15 / ATCC MYA-4574 / FGSC 10173) (Glume blotch fungus).